Consider the following 362-residue polypeptide: Methionine import ATP-binding protein MetN (362 aa).

One can recognise an ABC transporter domain in the interval 23-258 (VRLTDVKRRF…PQAEITGSLL (236 aa)). 55-62 (GRSGAGKS) contributes to the ATP binding site.

Belongs to the ABC transporter superfamily. Methionine importer (TC 3.A.1.24) family. As to quaternary structure, the complex is composed of two ATP-binding proteins (MetN), two transmembrane proteins (MetI) and a solute-binding protein (MetQ).

The protein localises to the cell inner membrane. It catalyses the reaction L-methionine(out) + ATP + H2O = L-methionine(in) + ADP + phosphate + H(+). The catalysed reaction is D-methionine(out) + ATP + H2O = D-methionine(in) + ADP + phosphate + H(+). Its function is as follows. Part of the ABC transporter complex MetNIQ involved in methionine import. Responsible for energy coupling to the transport system. This is Methionine import ATP-binding protein MetN from Rhizobium johnstonii (strain DSM 114642 / LMG 32736 / 3841) (Rhizobium leguminosarum bv. viciae).